We begin with the raw amino-acid sequence, 107 residues long: uncharacterized protein (107 aa).

Positions M1–G14 are enriched in polar residues. Residues M1 to T20 are disordered.

The protein localises to the mitochondrion. This is an uncharacterized protein from Arabidopsis thaliana (Mouse-ear cress).